Here is a 408-residue protein sequence, read N- to C-terminus: Serine/threonine transporter SstT (408 aa).

9 helical membrane-spanning segments follow: residues 11–31 (LANG…VSLA), 43–63 (FLGS…VFIL), 82–102 (IVVL…LLSM), 141–161 (ALMT…GLAL), 192–212 (IGIF…AIAG), 216–236 (LLAV…PLIV), 290–310 (IPLG…VLTL), 316–336 (LGIQ…AISA), and 363–383 (VAMQ…AAET).

The protein belongs to the dicarboxylate/amino acid:cation symporter (DAACS) (TC 2.A.23) family.

It localises to the cell inner membrane. The enzyme catalyses L-serine(in) + Na(+)(in) = L-serine(out) + Na(+)(out). It catalyses the reaction L-threonine(in) + Na(+)(in) = L-threonine(out) + Na(+)(out). Functionally, involved in the import of serine and threonine into the cell, with the concomitant import of sodium (symport system). The polypeptide is Serine/threonine transporter SstT (Shewanella sp. (strain MR-4)).